The sequence spans 215 residues: Ribose-5-phosphate isomerase A (215 aa).

Substrate is bound by residues 26 to 29, 79 to 82, and 92 to 95; these read TGST, DGAD, and KGGG. Catalysis depends on Glu-101, which acts as the Proton acceptor. Lys-119 serves as a coordination point for substrate.

Belongs to the ribose 5-phosphate isomerase family. In terms of assembly, homodimer.

The catalysed reaction is aldehydo-D-ribose 5-phosphate = D-ribulose 5-phosphate. The protein operates within carbohydrate degradation; pentose phosphate pathway; D-ribose 5-phosphate from D-ribulose 5-phosphate (non-oxidative stage): step 1/1. Functionally, catalyzes the reversible conversion of ribose-5-phosphate to ribulose 5-phosphate. This is Ribose-5-phosphate isomerase A from Xanthomonas oryzae pv. oryzae (strain PXO99A).